The chain runs to 1069 residues: Cellulose synthase A catalytic subunit 5 [UDP-forming] (1069 aa).

At Met-1 the chain carries N-acetylmethionine. Topologically, residues 1-265 (MNTGGRLIAG…KSSKINPYRM (265 aa)) are cytoplasmic. Residues Cys-39, Cys-42, Cys-58, Cys-61, Cys-66, Cys-69, Cys-81, and Cys-84 each contribute to the Zn(2+) site. The RING-type; degenerate zinc finger occupies 39–85 (CQICGDEIELSVDGESFVACNECAFPVCRPCYEYERREGNQSCPQCK). Phosphoserine is present on residues Ser-229 and Ser-230. Residues 266 to 286 (LIVLRLVILGLFFHYRILHPV) traverse the membrane as a helical segment. Residues 287 to 288 (ND) lie on the Extracellular side of the membrane. Residues 289-309 (AYALWLISVICEIWFAVSWVL) traverse the membrane as a helical segment. Residues 310–853 (DQFPKWYPIE…INSVVYPWTS (544 aa)) are Cytoplasmic-facing. UDP-alpha-D-glucose contacts are provided by Ser-348, Lys-354, Glu-355, and Asp-384. Residue Asp-384 is part of the active site. Residues 438 to 464 (VRERRAMKRDYEEFKVKINALVATAQK) adopt a coiled-coil conformation. Position 525 (Lys-525) interacts with UDP-alpha-D-glucose. Residues Lys-526 and Asp-550 each contribute to the Mn(2+) site. Asp-770 is an active-site residue. A helical membrane pass occupies residues 854–874 (IPLLVYCSLPAICLLTGKFIV). Residues 875 to 879 (PEISN) lie on the Extracellular side of the membrane. The helical transmembrane segment at 880–900 (YASILFMALFGSIAVTGILEM) threads the bilayer. Over 901–915 (QWGKVGIDDWWRNEQ) the chain is Cytoplasmic. A helical membrane pass occupies residues 916–936 (FWVIGGVSAHLFALFQGLLKV). Residues 937–965 (LAGVETNFTVTSKAADDGEFSELYIFKWT) are Extracellular-facing. A glycan (N-linked (GlcNAc...) asparagine) is linked at Asn-943. Residues 966 to 986 (SLLIPPTTLLIINVIGVIVGI) traverse the membrane as a helical segment. The Cytoplasmic segment spans residues 987–997 (SDAISNGYDSW). Residues 998–1018 (GPLFGRLFFAFWVILHLYPFL) traverse the membrane as a helical segment. Topologically, residues 1019-1027 (KGLLGKQDR) are extracellular. A helical transmembrane segment spans residues 1028–1048 (MPTIILVWSILLASILTLLWV). The Cytoplasmic segment spans residues 1049–1069 (RVNPFVAKGGPILEICGLDCL).

This sequence belongs to the glycosyltransferase 2 family. Plant cellulose synthase subfamily. It depends on Zn(2+) as a cofactor. Mn(2+) serves as cofactor. As to expression, expressed in young plants, stems and flowers.

It localises to the cell membrane. The catalysed reaction is [(1-&gt;4)-beta-D-glucosyl](n) + UDP-alpha-D-glucose = [(1-&gt;4)-beta-D-glucosyl](n+1) + UDP + H(+). It participates in glycan metabolism; plant cellulose biosynthesis. Catalytic subunit of cellulose synthase terminal complexes ('rosettes'), required for beta-1,4-glucan microfibril crystallization, a major mechanism of the cell wall formation. The chain is Cellulose synthase A catalytic subunit 5 [UDP-forming] from Arabidopsis thaliana (Mouse-ear cress).